The following is a 167-amino-acid chain: General odorant-binding protein 1 (167 aa).

Residues 1–22 (MAHTLQTVVLLLGTSILHPILA) form the signal peptide. Disulfide bonds link cysteine 41/cysteine 76, cysteine 72/cysteine 130, and cysteine 119/cysteine 139.

This sequence belongs to the PBP/GOBP family. As to expression, antenna.

Present in the aqueous fluid surrounding olfactory sensory dendrites and are thought to aid in the capture and transport of hydrophobic odorants into and through this fluid. The sequence is that of General odorant-binding protein 1 from Antheraea pernyi (Chinese oak silk moth).